A 330-amino-acid chain; its full sequence is Uracil-DNA glycosylase, mitochondrial (330 aa).

The N-terminal 49 residues, 1–49 (MASSTPKTLMDFFQPAKRLKASPSSSSFPAVSVAGGSRDLGSVANSPPR), are a transit peptide targeting the mitochondrion. Residue aspartate 173 is the Proton acceptor of the active site.

It belongs to the uracil-DNA glycosylase (UDG) superfamily. UNG family.

The protein resides in the mitochondrion. The catalysed reaction is Hydrolyzes single-stranded DNA or mismatched double-stranded DNA and polynucleotides, releasing free uracil.. With respect to regulation, inhidited by the small peptide uracil-DNA-glycosylase inhibitor (Ugi). Functionally, excises uracil residues from the DNA which can arise as a result of misincorporation of dUMP residues by DNA polymerase or due to deamination of cytosine. More active on U:G, U:T and U:C mispairs than on U:A pairs. Highly specific for uracil and no activity with 5-substituted uracil or cytosine derivatives. Required for initiation of base excision repair (BER) of uracil. This chain is Uracil-DNA glycosylase, mitochondrial, found in Arabidopsis thaliana (Mouse-ear cress).